Here is a 306-residue protein sequence, read N- to C-terminus: Sulfate adenylyltransferase subunit 2 (306 aa).

It belongs to the PAPS reductase family. CysD subfamily. In terms of assembly, heterodimer composed of CysD, the smaller subunit, and CysN.

The enzyme catalyses sulfate + ATP + H(+) = adenosine 5'-phosphosulfate + diphosphate. It functions in the pathway sulfur metabolism; hydrogen sulfide biosynthesis; sulfite from sulfate: step 1/3. Functionally, with CysN forms the ATP sulfurylase (ATPS) that catalyzes the adenylation of sulfate producing adenosine 5'-phosphosulfate (APS) and diphosphate, the first enzymatic step in sulfur assimilation pathway. APS synthesis involves the formation of a high-energy phosphoric-sulfuric acid anhydride bond driven by GTP hydrolysis by CysN coupled to ATP hydrolysis by CysD. The polypeptide is Sulfate adenylyltransferase subunit 2 (Brucella anthropi (strain ATCC 49188 / DSM 6882 / CCUG 24695 / JCM 21032 / LMG 3331 / NBRC 15819 / NCTC 12168 / Alc 37) (Ochrobactrum anthropi)).